We begin with the raw amino-acid sequence, 158 residues long: MLQISARFYCKIAKQQISELPKISKPSKLLDFKQLHHPTKVPQTPVPTAFPDATNNSEIEIDAKTIQLLERLSLVDLDSEQALATLKSSIQFADKIEHIDTHNVRPLYTVLEHQQLQLRNDRVAEGDCREQLLRIAKVTDEDYYVSPPGNIPLEQLDK.

It belongs to the GatC family. Subunit of the heterotrimeric GatCAB amidotransferase (AdT) complex, composed of A, B and C subunits.

Its subcellular location is the mitochondrion. The enzyme catalyses L-glutamyl-tRNA(Gln) + L-glutamine + ATP + H2O = L-glutaminyl-tRNA(Gln) + L-glutamate + ADP + phosphate + H(+). Its function is as follows. Allows the formation of correctly charged Gln-tRNA(Gln) through the transamidation of misacylated Glu-tRNA(Gln) in the mitochondria. The reaction takes place in the presence of glutamine and ATP through an activated gamma-phospho-Glu-tRNA(Gln). The chain is Glutamyl-tRNA(Gln) amidotransferase subunit C, mitochondrial from Drosophila grimshawi (Hawaiian fruit fly).